We begin with the raw amino-acid sequence, 161 residues long: Allophycocyanin beta subunit (161 aa).

Position 71 is an N4-methylasparagine (asparagine 71). Cysteine 81 lines the (2R,3E)-phycocyanobilin pocket.

This sequence belongs to the phycobiliprotein family. As to quaternary structure, heterodimer of an alpha and a beta chain. In terms of processing, contains one covalently linked phycocyanobilin chromophore. The chromophore is added by the phycocyanobilin lyase CpcUS.

It is found in the cellular thylakoid membrane. Light-harvesting photosynthetic bile pigment-protein from the phycobiliprotein complex. Allophycocyanin has a maximum absorption at approximately 650 nanometers. The chain is Allophycocyanin beta subunit (apcB) from Picosynechococcus sp. (strain ATCC 27264 / PCC 7002 / PR-6) (Agmenellum quadruplicatum).